A 159-amino-acid polypeptide reads, in one-letter code: Transmembrane protein 88 (159 aa).

2 helical membrane passes run leucine 43–phenylalanine 63 and phenylalanine 88–alanine 108.

The protein belongs to the TMEM88 family. As to quaternary structure, interacts (via C-terminus) with DVL1.

Its subcellular location is the cell membrane. Functionally, inhibits the Wnt/beta-catenin signaling pathway. Crucial for heart development and acts downstream of GATA factors in the pre-cardiac mesoderm to specify lineage commitment of cardiomyocyte development. This is Transmembrane protein 88 (Tmem88) from Mus musculus (Mouse).